The following is a 136-amino-acid chain: Autophagy-related protein 41 (136 aa).

The segment at 127–136 (QNYRLWLSSV) is ATG9-binding.

Interacts with ATG9.

The protein localises to the preautophagosomal structure membrane. In terms of biological role, involved in both selective and non-selective autophagy. Does not appear to play a role in determining the size of autophagosomes, but rather influences their formation rate. With ATG9, plays a role in the delivery of donor membrane to expanding phagophore. This chain is Autophagy-related protein 41, found in Saccharomyces cerevisiae (strain ATCC 204508 / S288c) (Baker's yeast).